A 704-amino-acid polypeptide reads, in one-letter code: MLRGRSLSVTSLGGLPAWEAERLPVEDLLLFEVSWEVTNKVGGICTVIQSKAKTTANEWGENYFLIGPYFEHNVKTQVEPCEPANDAVRKAVDAMNKHGCQVHFGRWLIEGSPYVVLFDISSSVWNLDRWKGDFWEACGVGIPHDDREANDMLIFGSLTAWFLKEVTDHADGKHVIAQFHEWQAGTGLILSRARKLPIATIFTTHATLLGRYLCAANIDFYNQLDKFNIDKEAGERQIYHRYCMERASVHCAHVFTTVSEITAIEADHMLKRKPDVVTPNGLNVKKFSAVHEFQNLHATYKARIQDFVRGHFYGHLDFDLEKTLFLFIAGRYEFSNKGADIFLESLSRLNFLLRMHKSNVTVVVFFIMPAKTNNFNVETLKGQAVRKQLWDTVHCMKEKFGKKLYDGLLRGEIPDMNSILDRDDLTIMKRAIFSTQRHSLPPVTTHNMIDDSTDPILSTIRRIGLFNNRTDRVKVILHPEFLSSTSPLLPMDYEEFVRGCHLGVFPSYYEPWGYTPAECTVMGIPSVTTNLSGFGCFMQEHVADPTAYGIYIVDRRFRSPDDSCNQLTQFLYGFCKQSRRQRIIQRNRTERLSDLLDWRYLGRYYQHARHLTLSRAFPDKFHLEPTSPPTTDGFKYPRPSSVPPSPSGSQTSSPQSSDVENEGDEDERYDEEEEAERDRLNIKSPFSLNHIPKGKKKLHGEYKN.

Phosphoserine occurs at positions 8 and 11. Position 40 (lysine 40) interacts with UDP. 2 residues coordinate UDP-alpha-D-glucose: histidine 205 and arginine 211. Alpha-D-glucose 6-phosphate-binding residues include histidine 291, glutamate 292, glutamine 294, histidine 297, and lysine 301. Arginine 331 is a UDP binding site. Arginine 331 is a binding site for UDP-alpha-D-glucose. Position 501 (histidine 501) interacts with alpha-D-glucose 6-phosphate. Residues glutamate 510, tryptophan 512, and glycine 513 each contribute to the UDP-alpha-D-glucose site. Residue threonine 515 coordinates UDP. Alpha-D-glucose 6-phosphate contacts are provided by arginine 582 and arginine 586. Positions 620 to 704 (KFHLEPTSPP…KKKLHGEYKN (85 aa)) are disordered. The residue at position 627 (serine 627) is a Phosphoserine. Phosphoserine; by GSK3-alpha and GSK3-beta is present on residues serine 641, serine 645, serine 649, and serine 653. Residues 647–657 (SGSQTSSPQSS) are compositionally biased toward low complexity. Serine 657 is modified (phosphoserine; by CK2). The span at 659 to 675 (VENEGDEDERYDEEEEA) shows a compositional bias: acidic residues. Position 684 is a phosphoserine (serine 684).

It belongs to the glycosyltransferase 3 family. As to quaternary structure, part of the glycogen synthase (GS)-glycogenin complex, a heterooctamer composed of a tetramer of GS and 2 dimers of glycogenin, where each GS protomer binds to one glycogenin subunit (via glycogenin C-terminus); the GS tetramer may dissociate from glycogenin dimers to continue glycogen polymerization on its own. May also form a heterooctamer complex with GYG1 (via GYG1 C-terminus). Primed phosphorylation at Ser-657 (site 5) by CSNK2A1 and CSNK2A2 is required for inhibitory phosphorylation at Ser-641 (site 3a), Ser-645 (site 3b), Ser-649 (site 3c) and Ser-653 (site 4) by GSK3A an GSK3B. Dephosphorylation at Ser-641 and Ser-645 by PP1 activates the enzyme. Phosphorylation at Ser-8 is not required for interaction with GYG1. Interaction with GYG1 does not regulate the phosphorylation at Ser-8 and Ser-641. In terms of tissue distribution, specifically expressed in liver (at protein level).

It catalyses the reaction [(1-&gt;4)-alpha-D-glucosyl](n) + UDP-alpha-D-glucose = [(1-&gt;4)-alpha-D-glucosyl](n+1) + UDP + H(+). The protein operates within glycan biosynthesis; glycogen biosynthesis. Its activity is regulated as follows. Allosteric activation by glucose-6-phosphate. Phosphorylation reduces the activity towards UDP-glucose. When in the non-phosphorylated state, glycogen synthase does not require glucose-6-phosphate as an allosteric activator; when phosphorylated it does. Functionally, glycogen synthase participates in the glycogen biosynthetic process along with glycogenin and glycogen branching enzyme. Extends the primer composed of a few glucose units formed by glycogenin by adding new glucose units to it. In this context, glycogen synthase transfers the glycosyl residue from UDP-Glc to the non-reducing end of alpha-1,4-glucan. The polypeptide is Glycogen [starch] synthase, liver (Rattus norvegicus (Rat)).